The primary structure comprises 477 residues: Probable cytosolic Fe-S cluster assembly factor GM20417 (477 aa).

[4Fe-4S] cluster contacts are provided by cysteine 23, cysteine 68, cysteine 71, cysteine 74, cysteine 187, cysteine 243, cysteine 395, and cysteine 399.

The protein belongs to the NARF family.

Functionally, component of the cytosolic iron-sulfur (Fe/S) protein assembly machinery. Required for maturation of extramitochondrial Fe/S proteins. The chain is Probable cytosolic Fe-S cluster assembly factor GM20417 from Drosophila sechellia (Fruit fly).